Consider the following 256-residue polypeptide: Phosphomannomutase (256 aa).

Asp12 acts as the Nucleophile in catalysis. Mg(2+)-binding residues include Asp12 and Asp14. The Proton donor/acceptor role is filled by Asp14. Positions 21, 123, 134, 141, 179, and 181 each coordinate alpha-D-mannose 1-phosphate. Asp209 provides a ligand contact to Mg(2+).

It belongs to the eukaryotic PMM family. In terms of assembly, homodimer.

It is found in the cytoplasm. The enzyme catalyses alpha-D-mannose 1-phosphate = D-mannose 6-phosphate. It functions in the pathway nucleotide-sugar biosynthesis; GDP-alpha-D-mannose biosynthesis; alpha-D-mannose 1-phosphate from D-fructose 6-phosphate: step 2/2. Involved in the synthesis of the GDP-mannose and dolichol-phosphate-mannose required for a number of critical mannosyl transfer reactions. This chain is Phosphomannomutase (SEC53), found in Encephalitozoon cuniculi (strain GB-M1) (Microsporidian parasite).